The sequence spans 239 residues: Cytochrome c oxidase subunit 2 (239 aa).

At M1 to H26 the chain is on the mitochondrial intermembrane side. The helical transmembrane segment at V27–S48 threads the bilayer. Residues K49 to E62 lie on the Mitochondrial matrix side of the membrane. Residues T63–K82 traverse the membrane as a helical segment. The Mitochondrial intermembrane segment spans residues L83–R239. The Cu cation site is built by H161, C196, E198, C200, H204, and M207. E198 contacts Mg(2+).

It belongs to the cytochrome c oxidase subunit 2 family. Component of the cytochrome c oxidase (complex IV, CIV), a multisubunit enzyme composed of a catalytic core of 3 subunits and several supernumerary subunits. The complex exists as a monomer or a dimer and forms supercomplexes (SCs) in the inner mitochondrial membrane with ubiquinol-cytochrome c oxidoreductase (cytochrome b-c1 complex, complex III, CIII). Cu cation is required as a cofactor.

It localises to the mitochondrion inner membrane. The enzyme catalyses 4 Fe(II)-[cytochrome c] + O2 + 8 H(+)(in) = 4 Fe(III)-[cytochrome c] + 2 H2O + 4 H(+)(out). In terms of biological role, component of the cytochrome c oxidase, the last enzyme in the mitochondrial electron transport chain which drives oxidative phosphorylation. The respiratory chain contains 3 multisubunit complexes succinate dehydrogenase (complex II, CII), ubiquinol-cytochrome c oxidoreductase (cytochrome b-c1 complex, complex III, CIII) and cytochrome c oxidase (complex IV, CIV), that cooperate to transfer electrons derived from NADH and succinate to molecular oxygen, creating an electrochemical gradient over the inner membrane that drives transmembrane transport and the ATP synthase. Cytochrome c oxidase is the component of the respiratory chain that catalyzes the reduction of oxygen to water. Electrons originating from reduced cytochrome c in the intermembrane space (IMS) are transferred via the dinuclear copper A center (CU(A)) of subunit 2 and heme A of subunit 1 to the active site in subunit 1, a binuclear center (BNC) formed by heme A3 and copper B (CU(B)). The BNC reduces molecular oxygen to 2 water molecules using 4 electrons from cytochrome c in the IMS and 4 protons from the mitochondrial matrix. The sequence is that of Cytochrome c oxidase subunit 2 (COII) from Branchiostoma lanceolatum (Common lancelet).